The primary structure comprises 475 residues: Aspartyl/glutamyl-tRNA(Asn/Gln) amidotransferase subunit B (475 aa).

It belongs to the GatB/GatE family. GatB subfamily. Heterotrimer of A, B and C subunits.

The catalysed reaction is L-glutamyl-tRNA(Gln) + L-glutamine + ATP + H2O = L-glutaminyl-tRNA(Gln) + L-glutamate + ADP + phosphate + H(+). The enzyme catalyses L-aspartyl-tRNA(Asn) + L-glutamine + ATP + H2O = L-asparaginyl-tRNA(Asn) + L-glutamate + ADP + phosphate + 2 H(+). In terms of biological role, allows the formation of correctly charged Asn-tRNA(Asn) or Gln-tRNA(Gln) through the transamidation of misacylated Asp-tRNA(Asn) or Glu-tRNA(Gln) in organisms which lack either or both of asparaginyl-tRNA or glutaminyl-tRNA synthetases. The reaction takes place in the presence of glutamine and ATP through an activated phospho-Asp-tRNA(Asn) or phospho-Glu-tRNA(Gln). This Thiobacillus denitrificans (strain ATCC 25259 / T1) protein is Aspartyl/glutamyl-tRNA(Asn/Gln) amidotransferase subunit B.